A 342-amino-acid polypeptide reads, in one-letter code: 6-hydroxytryprostatin B O-methyltransferase (342 aa).

Position 201 (aspartate 201) interacts with S-adenosyl-L-methionine. Histidine 244 serves as the catalytic Proton acceptor.

Belongs to the class I-like SAM-binding methyltransferase superfamily. Cation-independent O-methyltransferase family. In terms of assembly, homodimer.

The enzyme catalyses 6-hydroxytryprostatin B + S-adenosyl-L-methionine = tryprostatin A + S-adenosyl-L-homocysteine + H(+). Its pathway is alkaloid biosynthesis. Functionally, 6-hydroxytryprostatin B O-methyltransferase; part of the gene cluster that mediates the biosynthesis of fumitremorgins, indole alkaloids that carry not only intriguing chemical structures, but also interesting biological and pharmacological activities. The biosynthesis of fumitremorgin-type alkaloids begins by condensation of the two amino acids L-tryptophan and L-proline to brevianamide F, catalyzed by the non-ribosomal peptide synthetase ftmA. Brevianamide F is then prenylated by the prenyltransferase ftmPT1/ftmB in the presence of dimethylallyl diphosphate, resulting in the formation of tryprostatin B. The three cytochrome P450 monooxygenases, ftmP450-1/ftmC, ftmP450-2/ftmE and ftmP450-3/FtmG, are responsible for the conversion of tryprostatin B to 6-hydroxytryprostatin B, tryprostatin A to fumitremorgin C and fumitremorgin C to 12,13-dihydroxyfumitremorgin C, respectively. The putative methyltransferase ftmMT/ftmD is expected for the conversion of 6-hydroxytryprostatin B to tryprostatin A. FtmPT2/FtmH catalyzes the prenylation of 12,13-dihydroxyfumitre-morgin C in the presence of dimethylallyl diphosphate, resulting in the formation of fumitremorgin B. Fumitremorgin B is further converted to verruculogen by ftmOx1/ftmF via the insertion of an endoperoxide bond between the two prenyl moieties. In some fungal species, verruculogen is further converted to fumitremorgin A, but the enzymes involved in this step have not been identified yet. This chain is 6-hydroxytryprostatin B O-methyltransferase, found in Aspergillus fumigatus (Neosartorya fumigata).